Reading from the N-terminus, the 401-residue chain is Probable tRNA sulfurtransferase (401 aa).

A THUMP domain is found at 60 to 165 (EPIIEKLKTV…QDGTYVTCRD (106 aa)). Residues 183–184 (ML), 208–209 (HF), Arg-265, Gly-287, and Gln-296 each bind ATP.

The protein belongs to the ThiI family.

The protein localises to the cytoplasm. The catalysed reaction is [ThiI sulfur-carrier protein]-S-sulfanyl-L-cysteine + a uridine in tRNA + 2 reduced [2Fe-2S]-[ferredoxin] + ATP + H(+) = [ThiI sulfur-carrier protein]-L-cysteine + a 4-thiouridine in tRNA + 2 oxidized [2Fe-2S]-[ferredoxin] + AMP + diphosphate. It catalyses the reaction [ThiS sulfur-carrier protein]-C-terminal Gly-Gly-AMP + S-sulfanyl-L-cysteinyl-[cysteine desulfurase] + AH2 = [ThiS sulfur-carrier protein]-C-terminal-Gly-aminoethanethioate + L-cysteinyl-[cysteine desulfurase] + A + AMP + 2 H(+). It functions in the pathway cofactor biosynthesis; thiamine diphosphate biosynthesis. Catalyzes the ATP-dependent transfer of a sulfur to tRNA to produce 4-thiouridine in position 8 of tRNAs, which functions as a near-UV photosensor. Also catalyzes the transfer of sulfur to the sulfur carrier protein ThiS, forming ThiS-thiocarboxylate. This is a step in the synthesis of thiazole, in the thiamine biosynthesis pathway. The sulfur is donated as persulfide by IscS. The chain is Probable tRNA sulfurtransferase from Geobacillus kaustophilus (strain HTA426).